The sequence spans 91 residues: Long neurotoxin OH-37 (91 aa).

The first 21 residues, 1 to 21 (MKTLLLTLVVMTIVCLDLGYS), serve as a signal peptide directing secretion. 5 disulfide bridges follow: Cys24/Cys41, Cys34/Cys62, Cys47/Cys51, Cys66/Cys77, and Cys78/Cys83.

The protein belongs to the three-finger toxin family. Long-chain subfamily. Type II alpha-neurotoxin sub-subfamily. As to expression, expressed by the venom gland.

The protein resides in the secreted. Binds with high affinity to muscular (alpha-1/CHRNA1) and neuronal (alpha-7/CHRNA7) nicotinic acetylcholine receptor (nAChR) and inhibits acetylcholine from binding to the receptor, thereby impairing neuromuscular and neuronal transmission. The protein is Long neurotoxin OH-37 of Ophiophagus hannah (King cobra).